Reading from the N-terminus, the 383-residue chain is Hydroxymethylglutaryl-CoA synthase (383 aa).

Residue Asp-29 participates in (3S)-3-hydroxy-3-methylglutaryl-CoA binding. The Proton donor/acceptor role is filled by Glu-79. Residues Cys-111, Thr-152, Ser-201, His-233, Lys-242, Asn-275, and Ser-308 each contribute to the (3S)-3-hydroxy-3-methylglutaryl-CoA site. Cys-111 acts as the Acyl-thioester intermediate in catalysis. Residue His-233 is the Proton donor/acceptor of the active site.

Belongs to the thiolase-like superfamily. HMG-CoA synthase family. In terms of assembly, homodimer.

It carries out the reaction acetoacetyl-CoA + acetyl-CoA + H2O = (3S)-3-hydroxy-3-methylglutaryl-CoA + CoA + H(+). Its pathway is metabolic intermediate biosynthesis; (R)-mevalonate biosynthesis; (R)-mevalonate from acetyl-CoA: step 2/3. Its activity is regulated as follows. Is sensitive to feedback substrate inhibition by acetoacetyl-CoA. Is inactivated by hymeglusin, which also blocks the growth of E.faecalis, indicating the critical role that the mevalonate pathway plays in isoprenoid biosynthesis. Functionally, catalyzes the condensation of acetyl-CoA with acetoacetyl-CoA to form 3-hydroxy-3-methylglutaryl-CoA (HMG-CoA). Functions in the mevalonate (MVA) pathway leading to isopentenyl diphosphate (IPP), a key precursor for the biosynthesis of isoprenoid compounds. The chain is Hydroxymethylglutaryl-CoA synthase (mvaS) from Enterococcus faecalis (Streptococcus faecalis).